A 196-amino-acid chain; its full sequence is Putative AAA family ATPase L572 (196 aa).

32 to 39 (NAVNCKET) serves as a coordination point for ATP.

It belongs to the AAA ATPase family.

This is Putative AAA family ATPase L572 from Acanthamoeba polyphaga mimivirus (APMV).